Here is an 832-residue protein sequence, read N- to C-terminus: FAST kinase domain-containing protein 1, mitochondrial (832 aa).

Positions 765–825 (VAIEFLDSKA…KDAWMDYLRK (61 aa)) constitute an RAP domain.

Belongs to the FAST kinase family.

The protein resides in the mitochondrion. May regulate the stability of some mitochondrial mRNA species. The sequence is that of FAST kinase domain-containing protein 1, mitochondrial (fastkd1) from Xenopus laevis (African clawed frog).